Reading from the N-terminus, the 377-residue chain is DNA methyltransferase CcrM (377 aa).

Residues 271-373 enclose the RAMA domain; the sequence is LGKAELTVMT…LRKIIREQMA (103 aa).

The protein belongs to the N(4)/N(6)-methyltransferase family.

It catalyses the reaction a 2'-deoxyadenosine in DNA + S-adenosyl-L-methionine = an N(6)-methyl-2'-deoxyadenosine in DNA + S-adenosyl-L-homocysteine + H(+). Its function is as follows. A beta subtype methylase that recognizes the double-stranded sequence 5'-GANTC-3' and methylates on A-2 on both strands. Overexpression from a moderate-copy number plasmid (10-12 copies/cell) leads to enlarged, branched cells, many with 3-5 genome equivalents. Contributes to the accurate cell-cycle control of DNA replication and cellular morphology. The polypeptide is DNA methyltransferase CcrM (Brucella abortus (strain 2308)).